Consider the following 892-residue polypeptide: MCVLQLGWKWMQNLIVEVMWTQKEEQKAGINQNLRREEGKPNQQTVWRRAKKRRMNRRARGEAGGRSKKMRMRVRKNRREEERKLSIPGREQQRKTSQRRRSPSSCSSSSDNNSDDESMSEGEMARLKEEVEEKKKLIATLRNKPWRMKRRLKCLKEAQEFVEKFEGALGKGKGRRLYAFKVMMTKKLIKFNRDFENFKTACIPWESRIKEVESHFGSSVASYFIFLRWMYGLNLVLFGFMFGLVVIPELLMGIPYGSIPRKTVPREEQDSAMDFSVLFEFGGYCKYSILFYGFYNNQRTIGFLQFRLPLSYLLVGVGIFGYSLMVVIRTMARNANEGGDGGDEGNFTFCWKLFTSWDYLIGNPETADNKFASTTTSFKESIVDEQENLKDENIHLRRFLRLLANVLILCCLAGSGYLIYAVVKRSQDFAKRDRNELTWLQKNEVEIVMSLLGLVCPPLFEAIAELEDYHPRIALKWQLGRIFALFLGNLYTFLFALFDEVNGKLENEKQIKNQTVWALKEYYANYTLQYNITENIPPPNIAPADVIRGPCWETEVGIEFVKLTVSDIQVTYLTILIGDFLRALIVRFLNYCWCWDLEAGFPSYAEFDISGNVLGLIFNQGMIWMGAFYAPGLVGINVLRLLSSMYYQCWAVMACNVPHERVFKASRSNNFYMGLLLLVLFLSLMPVIYSIMTLPPSFDCGPFSGKDKMYDVITETIDKDLPPFMADIFSYASNPGLIISVVLLMVWLAIYYLNAVSKAYQNSNLELKRKMQMQRDEEKNRRNNKDSTNQVMKDLEDLLPNKSLIPPPSVEETEKPAEQPSKSSKVTGKPGAAASGKGVHVQKDVSLAAANPRAPVTRAPGPRQPGPLPGNPRGPPPGQGMGRGRGGPPPRR.

A disordered region spans residues 29 to 125; that stretch reads GINQNLRREE…DESMSEGEMA (97 aa). Basic residues-rich tracts occupy residues 48–58 and 66–77; these read RRAKKRRMNRR and RSKKMRMRVRKN. Residues 103–112 are compositionally biased toward low complexity; sequence PSSCSSSSDN. The next 9 helical transmembrane spans lie at 235–255, 275–295, 308–328, 403–423, 444–464, 482–502, 616–636, 671–691, and 736–756; these read LVLF…MGIP, FSVL…YGFY, LPLS…MVVI, LANV…YAVV, EVEI…EAIA, IFAL…DEVN, LIFN…LVGI, FYMG…IYSI, and GLII…LNAV. Positions 772 to 785 are enriched in basic and acidic residues; it reads QMQRDEEKNRRNNK. Disordered regions lie at residues 772-791 and 796-892; these read QMQR…TNQV and EDLL…PPRR. The segment covering 862 to 878 has biased composition (pro residues); it reads PRQPGPLPGNPRGPPPG.

It belongs to the TMC family. In adults, expression is restricted to the hair cells of inner ear and lateral line organ. Expressed at higher levels in the larval lateral-line neuromasts than in the larval inner ear.

Its subcellular location is the membrane. Probable component of the mechanotransducer (MET) non-selective cation channel. The polypeptide is Transmembrane channel-like protein 2-B (Danio rerio (Zebrafish)).